The sequence spans 335 residues: Large ribosomal subunit protein uL10 (335 aa).

The tract at residues 304-335 (GAAAPVEEAPVEEKKEEKKEEAAAPAGLGMLF) is disordered. Residues 314 to 325 (VEEKKEEKKEEA) show a composition bias toward basic and acidic residues.

Belongs to the universal ribosomal protein uL10 family. Part of the 50S ribosomal subunit. Homodimer, it forms part of the ribosomal stalk which helps the ribosome interact with GTP-bound translation factors. Forms both a pentameric L10(L12)2(L12)2 and heptameric L10(L12)2(L12)2(L12)2 complex, where L10 forms an elongated spine to which the L12 dimers bind in a sequential fashion. The proportion of heptameric complexes increases during cell growth.

Its function is as follows. Forms part of the ribosomal stalk, playing a central role in the interaction of the ribosome with GTP-bound translation factors. This is Large ribosomal subunit protein uL10 from Methanococcus maripaludis (strain DSM 14266 / JCM 13030 / NBRC 101832 / S2 / LL).